The sequence spans 303 residues: Peroxisomal trans-2-enoyl-CoA reductase (303 aa).

Position 23–47 (23–47 (VTGGATGIGKAIVKELLELGSNVVI)) interacts with NADP(+). At Lys-32 the chain carries N6-succinyllysine. Phosphoserine is present on Ser-49. Tyr-179 serves as the catalytic Proton acceptor. The residue at position 179 (Tyr-179) is a Phosphotyrosine. The Microbody targeting signal motif lies at 301 to 303 (AKL).

Belongs to the short-chain dehydrogenases/reductases (SDR) family. Interacts with PEX5, probably required to target it into peroxisomes.

Its subcellular location is the peroxisome. It catalyses the reaction a (2E)-enoyl-CoA + NADPH + H(+) = a 2,3-saturated acyl-CoA + NADP(+). The catalysed reaction is (2E)-decenoyl-CoA + NADPH + H(+) = decanoyl-CoA + NADP(+). It carries out the reaction (2E)-hexenoyl-CoA + NADPH + H(+) = hexanoyl-CoA + NADP(+). The enzyme catalyses (2E)-octenoyl-CoA + NADPH + H(+) = octanoyl-CoA + NADP(+). It catalyses the reaction (2E)-dodecenoyl-CoA + NADPH + H(+) = dodecanoyl-CoA + NADP(+). The catalysed reaction is (2E)-tetradecenoyl-CoA + NADPH + H(+) = tetradecanoyl-CoA + NADP(+). Its pathway is lipid metabolism; fatty acid biosynthesis. Functionally, participates in chain elongation of fatty acids. Catalyzes the reduction of trans-2-enoyl-CoAs of varying chain lengths from 6:1 to 16:1, having maximum activity with 10:1 CoA. Has no 2,4-dienoyl-CoA reductase activity. This is Peroxisomal trans-2-enoyl-CoA reductase from Homo sapiens (Human).